The primary structure comprises 89 residues: Small ribosomal subunit protein uS15 (89 aa).

This sequence belongs to the universal ribosomal protein uS15 family. In terms of assembly, part of the 30S ribosomal subunit. Forms a bridge to the 50S subunit in the 70S ribosome, contacting the 23S rRNA.

One of the primary rRNA binding proteins, it binds directly to 16S rRNA where it helps nucleate assembly of the platform of the 30S subunit by binding and bridging several RNA helices of the 16S rRNA. Functionally, forms an intersubunit bridge (bridge B4) with the 23S rRNA of the 50S subunit in the ribosome. In Pseudomonas putida (strain ATCC 700007 / DSM 6899 / JCM 31910 / BCRC 17059 / LMG 24140 / F1), this protein is Small ribosomal subunit protein uS15.